An 866-amino-acid chain; its full sequence is Speckle targeted PIP5K1A-regulated poly(A) polymerase (866 aa).

The Matrin-type zinc-finger motif lies at 16-46; sequence FRCCLCDVTTANRPSLDAHLKGRKHRDLVQL. In terms of domain architecture, RRM spans 56–128; that stretch reads RSVFVSGFPR…HTLRVRPREQ (73 aa). The segment at 116 to 147 is disordered; that stretch reads LGGHTLRVRPREQKEFQSPASKSPKGVDSNSH. Ser205 contributes to the ATP binding site. Mg(2+) contacts are provided by Asp216 and Asp218. 2 residues coordinate UTP: Asp216 and Asp218. Disordered stretches follow at residues 223–249 and 267–321; these read LGDM…STLA and LSPT…EGKH. The span at 282–304 shows a compositional bias: polar residues; the sequence is TPSSLAPQTPDSALGSDTVTSPQ. Asn393 is a binding site for ATP. The UTP site is built by Asn393, Arg415, Tyr433, and His550. Residues 492-550 enclose the PAP-associated domain; the sequence is LSSLLAQFFSCVSCWDLSGSLLSLREGQALMVAGGLPSDLWEGLRLGPMNLQDPFDLSH. The segment at 599-866 is KA1; binds the bulging loops of U6 snRNA but is dispensable for terminal uridylyltransferase activity; it reads SSPSSLLSAK…IPQALKNLLK (268 aa). Disordered regions lie at residues 638 to 687, 728 to 755, and 773 to 792; these read QGTK…DHSE, EQNP…PSSV, and RRRF…STGA. Residues 669–687 are compositionally biased toward basic and acidic residues; sequence KSCEEGKEEPQGCAGDHSE. 2 positions are modified to phosphoserine: Ser686 and Ser741.

Belongs to the DNA polymerase type-B-like family. As to quaternary structure, associates with the cleavage and polyadenylation specificity factor (CPSF) complex. Interacts with CPSF1 and CPSF3; the interaction is direct. Interacts with PIP5K1A. It depends on Mg(2+) as a cofactor. The cofactor is Mn(2+). Post-translationally, phosphorylated by CK1 in the proline-rich (Pro-rich) region.

Its subcellular location is the nucleus. It is found in the nucleolus. It localises to the nucleus speckle. It carries out the reaction RNA(n) + UTP = RNA(n)-3'-uridine ribonucleotide + diphosphate. It catalyses the reaction RNA(n) + ATP = RNA(n)-3'-adenine ribonucleotide + diphosphate. Adenylyltransferase activity is specifically phosphatidylinositol 4,5-bisphosphate (PtdIns(4,5)P2). Functionally, poly(A) polymerase that creates the 3'-poly(A) tail of specific pre-mRNAs. Localizes to nuclear speckles together with PIP5K1A and mediates polyadenylation of a select set of mRNAs, such as HMOX1. In addition to polyadenylation, it is also required for the 3'-end cleavage of pre-mRNAs: binds to the 3'UTR of targeted pre-mRNAs and promotes the recruitment and assembly of the CPSF complex on the 3'UTR of pre-mRNAs. In addition to adenylyltransferase activity, also has uridylyltransferase activity. However, the ATP ratio is higher than UTP in cells, suggesting that it functions primarily as a poly(A) polymerase. Acts as a specific terminal uridylyltransferase for U6 snRNA in vitro: responsible for a controlled elongation reaction that results in the restoration of the four 3'-terminal UMP-residues found in newly transcribed U6 snRNA. Not involved in replication-dependent histone mRNA degradation. This chain is Speckle targeted PIP5K1A-regulated poly(A) polymerase (Tut1), found in Rattus norvegicus (Rat).